We begin with the raw amino-acid sequence, 390 residues long: Acetate kinase (390 aa).

Asparagine 10 serves as a coordination point for Mg(2+). ATP is bound at residue lysine 17. Arginine 89 lines the substrate pocket. Aspartate 146 functions as the Proton donor/acceptor in the catalytic mechanism. ATP is bound by residues 204–208 (HLGNG), 278–280 (DMR), and 323–327 (GIGEN). Glutamate 376 is a Mg(2+) binding site.

The protein belongs to the acetokinase family. As to quaternary structure, homodimer. The cofactor is Mg(2+). Mn(2+) serves as cofactor.

The protein localises to the cytoplasm. It carries out the reaction acetate + ATP = acetyl phosphate + ADP. The protein operates within metabolic intermediate biosynthesis; acetyl-CoA biosynthesis; acetyl-CoA from acetate: step 1/2. Functionally, catalyzes the formation of acetyl phosphate from acetate and ATP. Can also catalyze the reverse reaction. The polypeptide is Acetate kinase (Mycoplasma pneumoniae (strain ATCC 29342 / M129 / Subtype 1) (Mycoplasmoides pneumoniae)).